The sequence spans 249 residues: Vesicle-associated membrane protein-associated protein A (249 aa).

The residue at position 2 (A2) is an N-acetylalanine. Over 2 to 227 the chain is Cytoplasmic; that stretch reads ASASGAMAKH…VSFRDNVTSP (226 aa). The MSP domain maps to 14-131; that stretch reads ILVLDPPSDL…MDSKLRCVFE (118 aa). Residues 50–53 are phosphorylated FFAT motif binding; sequence KVKT. K125 carries the post-translational modification N6-acetyllysine. Residues 135–144 show a composition bias toward basic and acidic residues; that stretch reads ENDKLNDMEP. The segment at 135-166 is disordered; the sequence is ENDKLNDMEPSKAVPLNASKQDGPLPKPHSVS. S166 is modified (phosphoserine). The stretch at 168–207 forms a coiled coil; the sequence is NDTETRKLMEECKRLQGEMMKLSEENRHLRDEGLRLRKVA. T170 is modified (phosphothreonine). 3 positions are modified to phosphoserine: S214, S216, and S219. The helical; Anchor for type IV membrane protein transmembrane segment at 228–248 threads the bilayer; the sequence is LPSLLVVIAAIFIGFFLGKFI.

It belongs to the VAMP-associated protein (VAP) (TC 9.B.17) family. In terms of assembly, homodimer; disulfide-linked. Heterodimer with VAPB. Interacts with VAMP1, VAMP2, STX1A, BET1, SEC22C and with the C-terminal domain of OCLN. Interacts (via MSP domain) with OSBPL1A (via FFAT motif). Interacts (via MSP domain) with ZFYVE27; may retain ZFYVE27 in the endoplasmic reticulum and regulate its function in cell projections formation. Interacts with OSBP. Interacts (via C-terminus) with RSAD2/viperin (via C-terminus). Interacts with IFITM3. Interacts with OSBPL3 (phosphorylated form). Interacts with KIF5A in a ZFYVE27-dependent manner. Interacts (via MSP domain) with STARD3 (via phosphorylated FFAT motif); this interaction recruits VAPA to the endosome. Interacts with STARD3NL (via FFAT motif). Interacts with CERT1. Interacts with PLEKHA3 and SACM1L to form a ternary complex. Interacts with VPS13A (via FFAT motif). Interacts with RB1CC1 (via phosphorylated FFAT motif), MIGA2 (via phosphorylated FFAT motif), RMDN3 (via phosphorylated FFAT motif), KCNB1 (via phosphorylated FFAT motif) and KCNB2 (via phosphorylated FFAT motif). Interacts (via MSP domain) with WDR44; the interactions connect the endoplasmic reticulum (ER) with the endosomal tubule. As to expression, ubiquitous.

The protein resides in the endoplasmic reticulum membrane. Its subcellular location is the cell membrane. It localises to the cell junction. It is found in the tight junction. The protein localises to the nucleus membrane. Functionally, endoplasmic reticulum (ER)-anchored protein that mediates the formation of contact sites between the ER and endosomes via interaction with FFAT motif-containing proteins such as STARD3 or WDR44. STARD3-VAPA interaction enables cholesterol transfer from the ER to endosomes. Via interaction with WDR44 participates in neosynthesized protein export. In addition, recruited to the plasma membrane through OSBPL3 binding. The OSBPL3-VAPA complex stimulates RRAS signaling which in turn attenuates integrin beta-1 (ITGB1) activation at the cell surface. With OSBPL3, may regulate ER morphology. May play a role in vesicle trafficking. The sequence is that of Vesicle-associated membrane protein-associated protein A from Rattus norvegicus (Rat).